The primary structure comprises 546 residues: Chaperonin GroEL 1 (546 aa).

ATP is bound by residues 30–33 (TLGP), Lys51, 87–91 (DGTTT), Gly415, 479–481 (NAA), and Asp495. Positions 526–546 (KEDAPMPGGMPGGMGGMGMDM) are disordered. Positions 534–546 (GMPGGMGGMGMDM) are enriched in gly residues.

Belongs to the chaperonin (HSP60) family. Forms a cylinder of 14 subunits composed of two heptameric rings stacked back-to-back. Interacts with the co-chaperonin GroES.

It localises to the cytoplasm. The enzyme catalyses ATP + H2O + a folded polypeptide = ADP + phosphate + an unfolded polypeptide.. In terms of biological role, together with its co-chaperonin GroES, plays an essential role in assisting protein folding. The GroEL-GroES system forms a nano-cage that allows encapsulation of the non-native substrate proteins and provides a physical environment optimized to promote and accelerate protein folding. The sequence is that of Chaperonin GroEL 1 from Burkholderia vietnamiensis (strain G4 / LMG 22486) (Burkholderia cepacia (strain R1808)).